The chain runs to 1030 residues: Probable serine/threonine-protein kinase SIS8 (1030 aa).

Composition is skewed to polar residues over residues 44–58 and 399–419; these read PNQSDEAEGSISTTK and YSASPGDNDSIHVASSSNGIE. 4 disordered regions span residues 44–84, 399–474, 555–625, and 689–736; these read PNQS…PEIK, YSAS…KAPF, TVES…ASST, and LGSN…SDCD. Composition is skewed to basic and acidic residues over residues 426 to 435, 458 to 471, and 560 to 580; these read TEFRTGEHRS, ISREDVKNQKKVEK, and NSTEAKKERGKDLETTQEGRH. The span at 613-625 shows a compositional bias: low complexity; it reads SQSDSSHSEASST. The Protein kinase domain occupies 748 to 1003; sequence ITVGERIGLG…AEIMASLKRL (256 aa). ATP contacts are provided by residues 754–762 and Lys-775; that span reads IGLGSYGEV. Asp-871 serves as the catalytic Proton acceptor. Polar residues predominate over residues 1007 to 1023; sequence VTGSNIPRPVPSSSSLP. Residues 1007–1030 form a disordered region; it reads VTGSNIPRPVPSSSSLPTEHEQKD.

This sequence belongs to the protein kinase superfamily. Ser/Thr protein kinase family. As to quaternary structure, interacts with UGT72E1. In terms of tissue distribution, expressed roots, rosette and cauline leaves, and at lower levels in flowers and siliques.

It localises to the nucleus. It carries out the reaction L-seryl-[protein] + ATP = O-phospho-L-seryl-[protein] + ADP + H(+). The enzyme catalyses L-threonyl-[protein] + ATP = O-phospho-L-threonyl-[protein] + ADP + H(+). Functionally, acts as a negative regulator of salt tolerance. Mediates sugar response during early seedling development. This is Probable serine/threonine-protein kinase SIS8 from Arabidopsis thaliana (Mouse-ear cress).